The sequence spans 630 residues: DNA topoisomerase 4 subunit B (630 aa).

Residues Tyr5, Asn42, Asp69, 110 to 116 (GLHGVGI), and Lys334 contribute to the ATP site. One can recognise a Toprim domain in the interval 412–525 (TELFLVEGDS…NGHVYVALPP (114 aa)). Mg(2+) is bound by residues Glu418, Asp490, and Asp492.

It belongs to the type II topoisomerase family. ParE type 1 subfamily. Heterotetramer composed of ParC and ParE. Mg(2+) is required as a cofactor. It depends on Mn(2+) as a cofactor. The cofactor is Ca(2+).

The enzyme catalyses ATP-dependent breakage, passage and rejoining of double-stranded DNA.. In terms of biological role, topoisomerase IV is essential for chromosome segregation. It relaxes supercoiled DNA. Performs the decatenation events required during the replication of a circular DNA molecule. In Salmonella typhi, this protein is DNA topoisomerase 4 subunit B.